A 132-amino-acid polypeptide reads, in one-letter code: Small ribosomal subunit protein uS8 (132 aa).

It belongs to the universal ribosomal protein uS8 family. In terms of assembly, part of the 30S ribosomal subunit. Contacts proteins S5 and S12.

Its function is as follows. One of the primary rRNA binding proteins, it binds directly to 16S rRNA central domain where it helps coordinate assembly of the platform of the 30S subunit. The chain is Small ribosomal subunit protein uS8 from Xanthomonas campestris pv. campestris (strain 8004).